We begin with the raw amino-acid sequence, 120 residues long: Nitrogenase-stabilizing/protective protein NifW (120 aa).

It belongs to the NifW family. In terms of assembly, homotrimer; associates with NifD.

In terms of biological role, may protect the nitrogenase Fe-Mo protein from oxidative damage. This Rhodospirillum rubrum (strain ATCC 11170 / ATH 1.1.1 / DSM 467 / LMG 4362 / NCIMB 8255 / S1) protein is Nitrogenase-stabilizing/protective protein NifW.